Consider the following 607-residue polypeptide: Arginine--tRNA ligase, cytoplasmic (607 aa).

N-acetylalanine is present on alanine 2. The residue at position 15 (serine 15) is a Phosphoserine. Interaction with tRNA regions lie at residues 59–60 (EW) and 106–111 (NGPFIQ). Residues 148 to 153 (EFSSPN), histidine 162, tyrosine 347, aspartate 351, and glutamine 375 contribute to the L-arginine site. The 'HIGH' region motif lies at 151–162 (SPNIAKPFHAGH). The tract at residues 484–498 (DTGPYLQYAHSRLRS) is interaction with tRNA.

It belongs to the class-I aminoacyl-tRNA synthetase family. In terms of assembly, monomer.

It is found in the cytoplasm. It localises to the cytosol. It carries out the reaction tRNA(Arg) + L-arginine + ATP = L-arginyl-tRNA(Arg) + AMP + diphosphate. In terms of biological role, forms part of a macromolecular complex that catalyzes the attachment of specific amino acids to cognate tRNAs during protein synthesis. The protein is Arginine--tRNA ligase, cytoplasmic of Saccharomyces cerevisiae (strain ATCC 204508 / S288c) (Baker's yeast).